A 281-amino-acid polypeptide reads, in one-letter code: MANLSNLKTQISNTQDIGKITNAMQLVASAKLRRIGKKVTETQEYVSEVYAIFNEIIKHSSESIYLKNSANDIKKTLWVVVNSNLGLCGGYNANVNKLVISNFKKEDQIYAIGSKAVSAYNSKKIKIKNECTDVDIDFSPAQAKQIGNELLSYYSSGEFDEIQIVYTKFINNVTFEPTKLRVFPIIKEETQETSSSYYSFEPSAEEVLNNAVTLYLSTIIFGTIVESQVSEQASRRLAMENATNNGKELEYNLSIQYNRERQASITQEISEIVSGANALMG.

Belongs to the ATPase gamma chain family. F-type ATPases have 2 components, CF(1) - the catalytic core - and CF(0) - the membrane proton channel. CF(1) has five subunits: alpha(3), beta(3), gamma(1), delta(1), epsilon(1). CF(0) has three main subunits: a, b and c.

It localises to the cell membrane. Functionally, produces ATP from ADP in the presence of a proton gradient across the membrane. The gamma chain is believed to be important in regulating ATPase activity and the flow of protons through the CF(0) complex. The sequence is that of ATP synthase gamma chain from Mesoplasma florum (strain ATCC 33453 / NBRC 100688 / NCTC 11704 / L1) (Acholeplasma florum).